A 194-amino-acid chain; its full sequence is Phosphoheptose isomerase (194 aa).

Residues 37–194 enclose the SIS domain; it reads ISDSFKQGGK…LIEFEMAKDV (158 aa). 52–54 contacts substrate; it reads NGG. Residues His61 and Glu65 each contribute to the Zn(2+) site. Substrate contacts are provided by residues Glu65, 93–94, 119–121, Ser124, and Gln172; these read ND and STS. Zn(2+)-binding residues include Gln172 and His180.

This sequence belongs to the SIS family. GmhA subfamily. Homotetramer. It depends on Zn(2+) as a cofactor.

The protein resides in the cytoplasm. It carries out the reaction 2 D-sedoheptulose 7-phosphate = D-glycero-alpha-D-manno-heptose 7-phosphate + D-glycero-beta-D-manno-heptose 7-phosphate. The protein operates within carbohydrate biosynthesis; D-glycero-D-manno-heptose 7-phosphate biosynthesis; D-glycero-alpha-D-manno-heptose 7-phosphate and D-glycero-beta-D-manno-heptose 7-phosphate from sedoheptulose 7-phosphate: step 1/1. In terms of biological role, catalyzes the isomerization of sedoheptulose 7-phosphate in D-glycero-D-manno-heptose 7-phosphate. The polypeptide is Phosphoheptose isomerase (Actinobacillus succinogenes (strain ATCC 55618 / DSM 22257 / CCUG 43843 / 130Z)).